The following is a 459-amino-acid chain: Peptidyl-prolyl cis-trans isomerase FKBP4 (459 aa).

Position 1 is an N-acetylmethionine; in peptidyl-prolyl cis-trans isomerase FKBP4; alternate (methionine 1). A disordered region spans residues 1-24 (MTAEEMKATESGAQSAPLPMEGVD). Threonine 2 bears the N-acetylthreonine; in peptidyl-prolyl cis-trans isomerase FKBP4, N-terminally processed; partial mark. Residues 50–138 (GDRVFVHYTG…VFEVELFEFK (89 aa)) form the PPIase FKBP-type 1 domain. The residue at position 143 (threonine 143) is a Phosphothreonine; by CK2. The PPIase FKBP-type 2 domain maps to 167-253 (GAIVEVALEG…KYELHLKSFE (87 aa)). Tyrosine 220 carries the post-translational modification Phosphotyrosine. The interaction with tubulin stretch occupies residues 267–400 (LEQSTIVKER…TQLAVCQQRI (134 aa)). 3 TPR repeats span residues 270–303 (STIVKERGTVYFKEGKYKQALLQYKKIVSWLEYE), 319–352 (LASHLNLAMCHLKLQAFSAAIESCNKALELDSNN), and 353–386 (EKGLFRRGEAHLAVNDFELARADFQKVLQLYPNN). Position 282 is an N6-acetyllysine (lysine 282). Arginine 373 bears the Omega-N-methylarginine mark. Residues 421 to 459 (EENKAKAEASSGDHPTDTEMKEEQKSNTAGSQSQVETEA) form a disordered region. The segment covering 434–445 (HPTDTEMKEEQK) has biased composition (basic and acidic residues). A Phosphothreonine modification is found at threonine 436. Residue lysine 441 forms a Glycyl lysine isopeptide (Lys-Gly) (interchain with G-Cter in SUMO1) linkage. Over residues 446 to 459 (SNTAGSQSQVETEA) the composition is skewed to polar residues. A phosphoserine mark is found at serine 451 and serine 453.

As to quaternary structure, homodimer. Interacts with GLMN. Associates with HSP90AA1 and HSP70 in steroid hormone receptor complexes. Also interacts with peroxisomal phytanoyl-CoA alpha-hydroxylase (PHYH). Interacts with NR3C1 and dynein. Interacts with HSF1 in the HSP90 complex. Associates with tubulin. Interacts with MAPT/TAU. Interacts (via TPR domain) with S100A1, S100A2 and S100A6; the interaction is Ca(2+) dependent. Interaction with S100A1 and S100A2 (but not with S100A6) leads to inhibition of FKBP4-HSP90 interaction. Interacts with dynein; causes partially NR3C1 transport to the nucleus. Post-translationally, phosphorylation by CK2 results in loss of HSP90 binding activity. As to expression, widely expressed.

The protein localises to the cytoplasm. Its subcellular location is the cytosol. It is found in the mitochondrion. The protein resides in the nucleus. It localises to the cytoskeleton. The protein localises to the cell projection. Its subcellular location is the axon. It catalyses the reaction [protein]-peptidylproline (omega=180) = [protein]-peptidylproline (omega=0). With respect to regulation, inhibited by FK506. Functionally, immunophilin protein with PPIase and co-chaperone activities. Component of steroid receptors heterocomplexes through interaction with heat-shock protein 90 (HSP90). May play a role in the intracellular trafficking of heterooligomeric forms of steroid hormone receptors between cytoplasm and nuclear compartments. The isomerase activity controls neuronal growth cones via regulation of TRPC1 channel opening. Also acts as a regulator of microtubule dynamics by inhibiting MAPT/TAU ability to promote microtubule assembly. May have a protective role against oxidative stress in mitochondria. The sequence is that of Peptidyl-prolyl cis-trans isomerase FKBP4 (FKBP4) from Homo sapiens (Human).